Here is a 195-residue protein sequence, read N- to C-terminus: Molybdenum cofactor guanylyltransferase (195 aa).

GTP-binding positions include 10 to 12 (LAG), Lys-23, Asn-51, Asp-69, and Asp-99. Asp-99 is a Mg(2+) binding site.

It belongs to the MobA family. Monomer. It depends on Mg(2+) as a cofactor.

The protein localises to the cytoplasm. The catalysed reaction is Mo-molybdopterin + GTP + H(+) = Mo-molybdopterin guanine dinucleotide + diphosphate. In terms of biological role, transfers a GMP moiety from GTP to Mo-molybdopterin (Mo-MPT) cofactor (Moco or molybdenum cofactor) to form Mo-molybdopterin guanine dinucleotide (Mo-MGD) cofactor. This Yersinia pestis bv. Antiqua (strain Antiqua) protein is Molybdenum cofactor guanylyltransferase.